Consider the following 394-residue polypeptide: Elongation factor Tu 1 (394 aa).

The region spanning 10-204 is the tr-type G domain; that stretch reads KPHVNVGTIG…ALDSYIPEPE (195 aa). The segment at 19–26 is G1; it reads GHVDHGKT. 19–26 provides a ligand contact to GTP; sequence GHVDHGKT. Residue T26 coordinates Mg(2+). Residues 60–64 are G2; the sequence is GITIN. Residues 81 to 84 are G3; it reads DCPG. GTP is bound by residues 81–85 and 136–139; these read DCPGH and NKCD. The tract at residues 136-139 is G4; the sequence is NKCD. The segment at 174 to 176 is G5; the sequence is SAL.

It belongs to the TRAFAC class translation factor GTPase superfamily. Classic translation factor GTPase family. EF-Tu/EF-1A subfamily. Monomer.

It localises to the cytoplasm. The enzyme catalyses GTP + H2O = GDP + phosphate + H(+). Functionally, GTP hydrolase that promotes the GTP-dependent binding of aminoacyl-tRNA to the A-site of ribosomes during protein biosynthesis. The chain is Elongation factor Tu 1 from Shewanella sp. (strain MR-4).